The chain runs to 709 residues: Homeobox-leucine zipper protein HDG4 (709 aa).

Residues 61-92 (ESGSGKSTGSGHDPVENTAIEQEPPAAKKKRY) are disordered. The homeobox DNA-binding region spans 88–147 (KKKRYHRHTASQIQQMEALFKENAHPDTKTRLRLSKKLGLSPIQVKFWFQNKRTQIKAQQ). Positions 137–205 (QNKRTQIKAQ…LDRLRSIVSM (69 aa)) form a coiled coil. One can recognise an START domain in the interval 229–466 (AEEEKAIDME…LKRQCERMAS (238 aa)).

Belongs to the HD-ZIP homeobox family. Class IV subfamily. As to expression, expressed in flowers.

It is found in the nucleus. Functionally, probable transcription factor. This Arabidopsis thaliana (Mouse-ear cress) protein is Homeobox-leucine zipper protein HDG4.